The following is a 123-amino-acid chain: Fluoride-specific ion channel FluC (123 aa).

4 helical membrane-spanning segments follow: residues 3 to 23, 34 to 54, 67 to 87, and 99 to 119; these read IAWV…LSNA, WGTL…FYLF, LVLV…LETL, and LLNM…GLVV. Na(+) is bound by residues G74 and T77.

The protein belongs to the fluoride channel Fluc/FEX (TC 1.A.43) family.

It localises to the cell inner membrane. It carries out the reaction fluoride(in) = fluoride(out). With respect to regulation, na(+) is not transported, but it plays an essential structural role and its presence is essential for fluoride channel function. Fluoride-specific ion channel. Important for reducing fluoride concentration in the cell, thus reducing its toxicity. The polypeptide is Fluoride-specific ion channel FluC (Magnetococcus marinus (strain ATCC BAA-1437 / JCM 17883 / MC-1)).